The chain runs to 142 residues: MKTIGLDVGTKTIGVAISDAFGWTAQGLPTIQRSEDDPNRDFEALAQLIKENDVQKVVIGYPKNMNGTVGESATRSETFARTLEQQCNVQTVLWDERLTTAAAQRVLIDADVSRKKRKKAVDKMAAVFILQGYLDRQSHTLT.

Belongs to the YqgF nuclease family.

It is found in the cytoplasm. Could be a nuclease involved in processing of the 5'-end of pre-16S rRNA. In Shouchella clausii (strain KSM-K16) (Alkalihalobacillus clausii), this protein is Putative pre-16S rRNA nuclease.